The sequence spans 92 residues: Small ribosomal subunit protein uS19 (92 aa).

It belongs to the universal ribosomal protein uS19 family.

In terms of biological role, protein S19 forms a complex with S13 that binds strongly to the 16S ribosomal RNA. This is Small ribosomal subunit protein uS19 from Polynucleobacter asymbioticus (strain DSM 18221 / CIP 109841 / QLW-P1DMWA-1) (Polynucleobacter necessarius subsp. asymbioticus).